The primary structure comprises 424 residues: Chloroquine resistance transporter (424 aa).

Residues 1 to 49 (MKFASKKNNQKNSSKNDERYRELDNLVQEGNGSRLGGGSCLGKCAHVFK) are Cytoplasmic-facing. The stretch at 50–58 (LIFKEIKDN) is an intramembrane region. Residues 59 to 83 (IFIYILSIIYLSVSVMNTIFAKRTL) traverse the membrane as a helical segment. Over 84-89 (NKIGNY) the chain is Vacuolar. The chain crosses the membrane as a helical span at residues 90 to 111 (SFVTSETHNFICMIMFFIVYSL). Over 112–126 (FGNKKGNSKERHRSF) the chain is Cytoplasmic. A helical transmembrane segment spans residues 127 to 147 (NLQFFAISMLDACSVILAFIG). The Vacuolar segment spans residues 148–152 (LTRTT). Residues 153–173 (GNIQSFVLQLSIPINMFFCFL) traverse the membrane as a helical segment. At 174 to 180 (ILRYRYH) the chain is on the cytoplasmic side. A helical membrane pass occupies residues 181 to 202 (LYNYLGAVIIVVTIALVEMKLS). Topologically, residues 203–210 (FETQEENS) are vacuolar. A helical membrane pass occupies residues 211–236 (IIFNLVLISSLIPVCFSNMTREIVFK). Residues 237–241 (KYKID) are Cytoplasmic-facing. A helical membrane pass occupies residues 242-263 (ILRLNAMVSFFQLFTSCLILPV). The Vacuolar portion of the chain corresponds to 264 to 279 (YTLPFLKQLHLPYNEI). An intramembrane segment occupies 280–292 (WTNIKNGFACLFL). Disulfide bonds link cysteine 289-cysteine 312 and cysteine 301-cysteine 309. Residues 293–314 (GRNTVVENCGLGMAKLCDDCDG) are Vacuolar-facing. A helical membrane pass occupies residues 315 to 339 (AWKTFALFSFFDICDNLITSYIIDK). Residues 340–343 (FSTM) are Cytoplasmic-facing. A helical membrane pass occupies residues 344-361 (TYTIVSCIQGPALAIAYY). Topologically, residues 362 to 374 (FKFLAGDVVREPR) are vacuolar. A helical membrane pass occupies residues 375–397 (LLDFVTLFGYLFGSIIYRVGNII). Topologically, residues 398–424 (LERKKMRNEENEDSEGELTNVDSIITQ) are cytoplasmic.

Belongs to the CRT-like transporter family. As to quaternary structure, monomer.

It is found in the membrane. Its subcellular location is the vacuole membrane. It carries out the reaction L-arginine(in) = L-arginine(out). The catalysed reaction is L-lysine(in) = L-lysine(out). The enzyme catalyses L-histidine(out) = L-histidine(in). It catalyses the reaction Fe(3+)(in) = Fe(3+)(out). It carries out the reaction Fe(2+)(in) = Fe(2+)(out). In terms of biological role, nutrient transporter. Substrate transport is pH-dependent. Can transport arginine, lysine, histidine and peptides. Involved in maintaining the osmotic homeostasis of the digestive vacuole. Required for the normal asexual intraerythrocytic proliferation of parasites. Can transport Fe(2+) and Fe(3+). This is Chloroquine resistance transporter from Plasmodium falciparum (isolate 7G8).